The chain runs to 421 residues: D-amino-acid oxidase (421 aa).

The FAD site is built by Ala12, Gly13, Ala14, Val15, Gly47, Gly64, Ile65, Lys225, Ala226, Arg359, Gly385, Gly388, and Leu389. A D-proline-binding site is contributed by Arg359. D-serine is bound at residue Arg359.

The protein belongs to the DAMOX/DASOX family. Requires FAD as cofactor.

The protein resides in the cytoplasm. Its subcellular location is the secreted. It is found in the cell wall. It catalyses the reaction a D-alpha-amino acid + O2 + H2O = a 2-oxocarboxylate + H2O2 + NH4(+). In terms of biological role, catalyzes the oxidative deamination of D-amino acids with broad substrate specificity. The chain is D-amino-acid oxidase from Bradyrhizobium diazoefficiens (strain JCM 10833 / BCRC 13528 / IAM 13628 / NBRC 14792 / USDA 110).